Reading from the N-terminus, the 585-residue chain is Staphyloferrin A synthase (585 aa).

This sequence belongs to the IucA/IucC family.

It carries out the reaction N(5)-[(S)-citryl]-D-ornithine + citrate + ATP = staphyloferrin A + AMP + diphosphate + H(+). The protein operates within siderophore biosynthesis. Functionally, involved in the biosynthesis of the siderophore staphyloferrin A. Catalyzes the ATP-dependent condensation of a citryl-D-ornithine intermediate, produced by SfnaD, and citrate to form staphyloferrin A. The sequence is that of Staphyloferrin A synthase from Staphylococcus aureus (strain NCTC 8325 / PS 47).